Here is a 175-residue protein sequence, read N- to C-terminus: NAD(P)H-quinone oxidoreductase subunit I, chloroplastic (175 aa).

4Fe-4S ferredoxin-type domains lie at 55-84 (GRIHFEFDKCIACEVCVRVCPINLPVVNWE) and 95-124 (QTYSIDFGVCIFCGNCVEYCPTNCLSMTEE). The [4Fe-4S] cluster site is built by cysteine 64, cysteine 67, cysteine 70, cysteine 74, cysteine 104, cysteine 107, cysteine 110, and cysteine 114.

The protein belongs to the complex I 23 kDa subunit family. NDH is composed of at least 16 different subunits, 5 of which are encoded in the nucleus. Requires [4Fe-4S] cluster as cofactor.

It localises to the plastid. The protein resides in the chloroplast thylakoid membrane. It catalyses the reaction a plastoquinone + NADH + (n+1) H(+)(in) = a plastoquinol + NAD(+) + n H(+)(out). The enzyme catalyses a plastoquinone + NADPH + (n+1) H(+)(in) = a plastoquinol + NADP(+) + n H(+)(out). Its function is as follows. NDH shuttles electrons from NAD(P)H:plastoquinone, via FMN and iron-sulfur (Fe-S) centers, to quinones in the photosynthetic chain and possibly in a chloroplast respiratory chain. The immediate electron acceptor for the enzyme in this species is believed to be plastoquinone. Couples the redox reaction to proton translocation, and thus conserves the redox energy in a proton gradient. This is NAD(P)H-quinone oxidoreductase subunit I, chloroplastic from Chlorokybus atmophyticus (Soil alga).